A 273-amino-acid chain; its full sequence is 4-hydroxy-tetrahydrodipicolinate reductase (273 aa).

NAD(+) is bound by residues 12–17 (GAGGRM) and Glu-38. Arg-39 serves as a coordination point for NADP(+). Residues 102–104 (GTT) and 126–129 (AANF) each bind NAD(+). His-159 acts as the Proton donor/acceptor in catalysis. His-160 lines the (S)-2,3,4,5-tetrahydrodipicolinate pocket. Lys-163 (proton donor) is an active-site residue. 169 to 170 (GT) is a (S)-2,3,4,5-tetrahydrodipicolinate binding site.

Belongs to the DapB family. In terms of assembly, homotetramer.

It is found in the cytoplasm. The enzyme catalyses (S)-2,3,4,5-tetrahydrodipicolinate + NAD(+) + H2O = (2S,4S)-4-hydroxy-2,3,4,5-tetrahydrodipicolinate + NADH + H(+). It carries out the reaction (S)-2,3,4,5-tetrahydrodipicolinate + NADP(+) + H2O = (2S,4S)-4-hydroxy-2,3,4,5-tetrahydrodipicolinate + NADPH + H(+). Its pathway is amino-acid biosynthesis; L-lysine biosynthesis via DAP pathway; (S)-tetrahydrodipicolinate from L-aspartate: step 4/4. In terms of biological role, catalyzes the conversion of 4-hydroxy-tetrahydrodipicolinate (HTPA) to tetrahydrodipicolinate. The protein is 4-hydroxy-tetrahydrodipicolinate reductase of Salmonella choleraesuis (strain SC-B67).